The chain runs to 459 residues: Alpha,alpha-trehalose-phosphate synthase [UDP-forming] (459 aa).

Y86 and D140 together coordinate D-glucose 6-phosphate. Residues R262 and K267 each coordinate UDP. Residues R262 and K267 each coordinate UDP-alpha-D-glucose. R300 lines the D-glucose 6-phosphate pocket. Residue D361–E369 coordinates UDP-alpha-D-glucose. L365–E369 contacts UDP.

The protein belongs to the glycosyltransferase 20 family. As to quaternary structure, component of the trehalose synthase complex.

It is found in the cytoplasm. The catalysed reaction is D-glucose 6-phosphate + UDP-alpha-D-glucose = alpha,alpha-trehalose 6-phosphate + UDP + H(+). Synthase catalytic subunit of the trehalose synthase complex that catalyzes the production of trehalose from glucose-6-phosphate and UDP-alpha-D-glucose in a two step process. Can function independently of the complex. This chain is Alpha,alpha-trehalose-phosphate synthase [UDP-forming] (TPS1), found in Encephalitozoon cuniculi (strain GB-M1) (Microsporidian parasite).